Consider the following 218-residue polypeptide: Esterase FPY3 (218 aa).

Catalysis depends on charge relay system residues S95, D163, and H190.

This sequence belongs to the LovG family.

It functions in the pathway secondary metabolite biosynthesis. Functionally, esterase; part of the gene cluster that mediates the biosynthesis of the gamma-pyrones fusapyrone (FPY) and deoxyfusapyrone (dFPY). FPY is an undecaketide and thus likely synthesized by the polyketide synthase FPY1 from acetyl-CoA functioning as starter unit and the addition of 10 malonyl-CoA extender units by successive Claisen-condensations. Next to this, FPY shares some rare features: C-glycosylated 4-deoxyglucose at C-3, a gem-dimethyl group at C-13, and an alpha-beta to beta-gamma double bond shift at C-20. During FPY biosynthesis mono-C-methyl groups are transferred to the tetra-, penta-, hexa- and heptaketide, while two C-methyl groups are transferred to the nonaketide, suggesting that the CMet domain is programmed to selectively catalyze two successive C-alpha-methylation reactions of the nonaketide, while other alpha-carbons are non- or mono-methylated only. While the origin of the 4'-deoxyglucose moiety remains opaque, its transfer to C-3 is most likely mediated by the C-glycosyltransferase FPY2. Next to this, the hydroxyl group present at C-33 and discriminating between FPY and dFPY, is likely to be installed by the cytochrome P450 monooxygenase FPY7. No putative function can be predicted for the remaining genes FPY3-FPY6. The sequence is that of Esterase FPY3 from Fusarium mangiferae (Mango malformation disease fungus).